Consider the following 292-residue polypeptide: AKT-interacting protein (292 aa).

The disordered stretch occupies residues 1 to 63 (MNPLWSMSAG…TSPAPAAQST (63 aa)). A compositionally biased stretch (basic and acidic residues) spans 14 to 23 (KRAEGEEKTL). The residue at position 30 (S30) is a Phosphoserine. In terms of domain architecture, UBC core spans 74–222 (YLEYSLLAEF…VVDSVKVCTA (149 aa)).

Belongs to the ubiquitin-conjugating enzyme family. FTS subfamily. As to quaternary structure, component of the FTS/Hook/FHIP complex (FHF complex), composed of AKTIP/FTS, FHIP1B, and one or more members of the Hook family of proteins HOOK1, HOOK2, and HOOK3. Interacts directly with HOOK1, HOOK2 and HOOK3. The FHF complex associates with the homotypic vesicular sorting complex (the HOPS complex). Also interacts with AKT1. May interact with FHIP1A. In terms of tissue distribution, ubiquitous. Highest expression in kidney, testis and brain and lowest in spleen and liver.

The protein resides in the cytoplasm. It is found in the cell membrane. Its function is as follows. Component of the FTS/Hook/FHIP complex (FHF complex). The FHF complex may function to promote vesicle trafficking and/or fusion via the homotypic vesicular protein sorting complex (the HOPS complex). Regulates apoptosis by enhancing phosphorylation and activation of AKT1. Increases release of TNFSF6 via the AKT1/GSK3B/NFATC1 signaling cascade. FHF complex promotes the distribution of AP-4 complex to the perinuclear area of the cell. The sequence is that of AKT-interacting protein (Aktip) from Mus musculus (Mouse).